Consider the following 74-residue polypeptide: MPRTRKKVEVKVAPKGAKLQLKWIRSAIQAPVKHKLVIKGLGFTRLNQVIVREDSPSIRGMVAKVPHLVEIVQQ.

The protein belongs to the universal ribosomal protein uL30 family. Part of the 50S ribosomal subunit.

The protein is Large ribosomal subunit protein uL30 of Koribacter versatilis (strain Ellin345).